The following is a 164-amino-acid chain: MD-2-related lipid-recognition protein 3 (164 aa).

Positions Met1–Gly24 are cleaved as a signal peptide.

In terms of assembly, interacts with RUB1/NEDD8. Post-translationally, neddylated. Ubiquitinated.

It is found in the vacuole. The protein localises to the endoplasmic reticulum. In terms of biological role, may be involved in herbivory-mediated responses. May play a role in herbivory-associated molecular pattern (HAMP) recognition. May function is jasmonate (JA) signaling in response to HAMP. May play a role in defense response against the pathogens Altenaria brassicicola and Pseudomonas syringae. This chain is MD-2-related lipid-recognition protein 3, found in Arabidopsis thaliana (Mouse-ear cress).